Reading from the N-terminus, the 905-residue chain is Coatomer subunit beta' (905 aa).

WD repeat units follow at residues 13–52 (ARSD…LVKT), 55–94 (VCDL…RVHM), 97–136 (AHSD…SCSQ), 140–180 (GHTH…PNFT), 183–224 (GHEK…CVQT), 227–266 (GHAQ…LEST), 350–388 (SCEI…NKSF), and 390–425 (SAQE…KSFK). The residue at position 627 (K627) is an N6-acetyllysine. One copy of the WD 9 repeat lies at 746–783 (IRTGRLPEAAFLARTYLPSQVSRVVKLWRENLSKVNQK). The disordered stretch occupies residues 837–873 (EEAKGFQPSRPTAQQEPDGKPASSPVIMASQTTHKEE). A Phosphoserine modification is found at S859. The stretch at 867–891 (QTTHKEEKSLLELEVDLDNLELEDI) forms a coiled coil.

Belongs to the WD repeat COPB2 family. Oligomeric complex that consists of at least the alpha, beta, beta', gamma, delta, epsilon and zeta subunits. Probably interacts with PEX11A. Interacts with SCYL1. Interacts with JAGN1.

Its subcellular location is the cytoplasm. The protein localises to the cytosol. It is found in the golgi apparatus membrane. It localises to the cytoplasmic vesicle. The protein resides in the COPI-coated vesicle membrane. Functionally, the coatomer is a cytosolic protein complex that binds to dilysine motifs and reversibly associates with Golgi non-clathrin-coated vesicles, which further mediate biosynthetic protein transport from the ER, via the Golgi up to the trans Golgi network. Coatomer complex is required for budding from Golgi membranes, and is essential for the retrograde Golgi-to-ER transport of dilysine-tagged proteins. In mammals, the coatomer can only be recruited by membranes associated to ADP-ribosylation factors (ARFs), which are small GTP-binding proteins; the complex also influences the Golgi structural integrity, as well as the processing, activity, and endocytic recycling of LDL receptors. Its function is as follows. This coatomer complex protein, essential for Golgi budding and vesicular trafficking, is a selective binding protein (RACK) for protein kinase C, epsilon type. It binds to Golgi membranes in a GTP-dependent manner. In Mus musculus (Mouse), this protein is Coatomer subunit beta' (Copb2).